Reading from the N-terminus, the 479-residue chain is MRVLHVCSELFPLLKTGGLADVAGALPGAQIAAGMDVRVILPAFPDLKKGIANLQVVRELDTFAGHVTLLFGHFNGVGIYLIDVPELYERAGSPYHDPALYAYADNYLRFALLGWMGCEMACGLDHYWRPDIVHAHDWHAGLTCAYLAARNRPAKSVFTVHNLAYQGLFAAGHMANLHLPSDFFQVYGLEFYGQISYLKAGLFYADHITTVSPTYAHEITLPAYGYGMEGLLKTREEEGRLSGILNGVDETIWNPTHDPLLTNHYSREALANKAENKRHLQTAMGLKVDDKAPVFAIVSRLTSQKGLDIALSAIPDLLEQGGQLVVLGAGDADLQEGFLAAAAEYHGQVGVQIGYHEAFSHRIIGGADVIMVPSRFEPCGLTQLYGLKYGTLPLVRRTGGLADTVSDCSLENLADGLASGFVFNDCSVGSLSRAIRRVFVLWSRPTLWRYVQRQAMAMDFGWQVSAQAYGALYQRLHTH.

Residue Lys15 participates in ADP-alpha-D-glucose binding.

It belongs to the glycosyltransferase 1 family. Bacterial/plant glycogen synthase subfamily.

It carries out the reaction [(1-&gt;4)-alpha-D-glucosyl](n) + ADP-alpha-D-glucose = [(1-&gt;4)-alpha-D-glucosyl](n+1) + ADP + H(+). The protein operates within glycan biosynthesis; glycogen biosynthesis. Functionally, synthesizes alpha-1,4-glucan chains using ADP-glucose. The chain is Glycogen synthase from Pectobacterium atrosepticum (strain SCRI 1043 / ATCC BAA-672) (Erwinia carotovora subsp. atroseptica).